The primary structure comprises 2104 residues: Protein Ycf2 (2104 aa).

Residue 1396–1403 (GPVETGRS) participates in ATP binding.

It belongs to the Ycf2 family.

The protein localises to the plastid. The protein resides in the chloroplast stroma. Functionally, probable ATPase of unknown function. Its presence in a non-photosynthetic plant (Epifagus virginiana) and experiments in tobacco indicate that it has an essential function which is probably not related to photosynthesis. The chain is Protein Ycf2 (ycf2-A) from Adiantum capillus-veneris (Maidenhair fern).